The sequence spans 499 residues: Type-1 glutamine synthetase 1 (499 aa).

In terms of domain architecture, GS beta-grasp spans Pro-50–Asn-146. The GS catalytic domain occupies Pro-158–Phe-499.

The protein belongs to the glutamine synthetase family.

The catalysed reaction is L-glutamate + NH4(+) + ATP = L-glutamine + ADP + phosphate + H(+). This is Type-1 glutamine synthetase 1 (glnA1) from Dictyostelium discoideum (Social amoeba).